Consider the following 493-residue polypeptide: Glutamate--tRNA ligase (493 aa).

A 'HIGH' region motif is present at residues 10–20; that stretch reads PSPTGDPHVGT. The 'KMSKS' region signature appears at 251–255; that stretch reads KLSKR. Lys254 serves as a coordination point for ATP.

The protein belongs to the class-I aminoacyl-tRNA synthetase family. Glutamate--tRNA ligase type 1 subfamily. Monomer.

It localises to the cytoplasm. The catalysed reaction is tRNA(Glu) + L-glutamate + ATP = L-glutamyl-tRNA(Glu) + AMP + diphosphate. In terms of biological role, catalyzes the attachment of glutamate to tRNA(Glu) in a two-step reaction: glutamate is first activated by ATP to form Glu-AMP and then transferred to the acceptor end of tRNA(Glu). The polypeptide is Glutamate--tRNA ligase (Pseudomonas fluorescens (strain Pf0-1)).